Consider the following 422-residue polypeptide: Probable protein phosphatase 2C 43 (422 aa).

The region spanning 117–393 (SSGSYADKGD…DNVTVVVICF (277 aa)) is the PPM-type phosphatase domain. Residues aspartate 163, glycine 164, aspartate 341, and aspartate 384 each contribute to the Mn(2+) site.

The protein belongs to the PP2C family. Mg(2+) serves as cofactor. It depends on Mn(2+) as a cofactor.

The enzyme catalyses O-phospho-L-seryl-[protein] + H2O = L-seryl-[protein] + phosphate. The catalysed reaction is O-phospho-L-threonyl-[protein] + H2O = L-threonyl-[protein] + phosphate. This Arabidopsis thaliana (Mouse-ear cress) protein is Probable protein phosphatase 2C 43.